A 626-amino-acid chain; its full sequence is Glyco-Gag protein (626 aa).

Residues 1-66 (LGDVPGTSGA…SVWNRSRAAR (66 aa)) lie on the Cytoplasmic side of the membrane. Residues 67 to 86 (LVCCSIVLCCLCLTVFLYLS) form a helical membrane-spanning segment. At 87–626 (ENMGQAVTTP…PQASLLTLDD (540 aa)) the chain is on the extracellular side. Asn-113 is a glycosylation site (N-linked (GlcNAc...) asparagine; by host). Composition is skewed to pro residues over residues 198 to 212 (PPSA…PLST) and 249 to 261 (DPPP…PPSP). Disordered regions lie at residues 198–306 (PPSA…FPLR) and 522–626 (RETP…TLDD). Composition is skewed to basic and acidic residues over residues 522–554 (RETP…EKER) and 574–607 (RQDR…DCPK). Residues 526 to 566 (EEREERIRRETEEKEERRRAEDVQREKERDRRRHREMSKLL) adopt a coiled-coil conformation. The CCHC-type zinc finger occupies 590–607 (DQCAYCKEKGHWARDCPK).

In terms of processing, glycosylated by host. Cleaved by host near the middle of the molecule, releasing the c-terminal half containing capsid and nucleoprotein domains op GAG.

The protein localises to the host cell membrane. Plays a role in viral particle release. Presumably acts by facilitating the fission of the virion bud at the cell surface. May prevent the antiviral activity of murine APOBEC3. The protein is Glyco-Gag protein of Mus musculus (Mouse).